The primary structure comprises 752 residues: Multifunctional tryptophan biosynthesis protein (752 aa).

In terms of domain architecture, Glutamine amidotransferase type-1 spans 3–202; the sequence is FTLLIDNYDS…IQMKGGKWGG (200 aa). 58-60 contacts L-glutamine; that stretch reads GPG. Cysteine 86 acts as the Nucleophile; for GATase activity in catalysis. 136–137 lines the L-glutamine pocket; sequence SL. Residues histidine 176 and glutamate 178 each act as for GATase activity in the active site. The tract at residues 231-495 is indole-3-glycerol phosphate synthase; the sequence is ILNRIHAQRL…DTKAFLRSLI (265 aa). The segment at 509 to 752 is N-(5'-phosphoribosyl)anthranilate isomerase; that stretch reads LVKICGIRST…VEAFVKAVRG (244 aa).

It carries out the reaction N-(5-phospho-beta-D-ribosyl)anthranilate = 1-(2-carboxyphenylamino)-1-deoxy-D-ribulose 5-phosphate. The catalysed reaction is 1-(2-carboxyphenylamino)-1-deoxy-D-ribulose 5-phosphate + H(+) = (1S,2R)-1-C-(indol-3-yl)glycerol 3-phosphate + CO2 + H2O. The enzyme catalyses chorismate + L-glutamine = anthranilate + pyruvate + L-glutamate + H(+). Its pathway is amino-acid biosynthesis; L-tryptophan biosynthesis; L-tryptophan from chorismate: step 1/5. It functions in the pathway amino-acid biosynthesis; L-tryptophan biosynthesis; L-tryptophan from chorismate: step 3/5. It participates in amino-acid biosynthesis; L-tryptophan biosynthesis; L-tryptophan from chorismate: step 4/5. Its function is as follows. Trifunctional enzyme bearing the Gln amidotransferase (GATase) domain of anthranilate synthase, indole-glycerolphosphate synthase, and phosphoribosylanthranilate isomerase activities. The sequence is that of Multifunctional tryptophan biosynthesis protein (TRP1) from Cryptococcus neoformans var. neoformans serotype D (strain JEC21 / ATCC MYA-565) (Filobasidiella neoformans).